A 192-amino-acid chain; its full sequence is Pyridoxal 5'-phosphate synthase subunit PdxT (192 aa).

50-52 is a binding site for L-glutamine; sequence GES. Cysteine 82 functions as the Nucleophile in the catalytic mechanism. Residues arginine 109 and 136–137 each bind L-glutamine; that span reads IR. Active-site charge relay system residues include histidine 172 and glutamate 174.

This sequence belongs to the glutaminase PdxT/SNO family. In terms of assembly, in the presence of PdxS, forms a dodecamer of heterodimers. Only shows activity in the heterodimer.

It catalyses the reaction aldehydo-D-ribose 5-phosphate + D-glyceraldehyde 3-phosphate + L-glutamine = pyridoxal 5'-phosphate + L-glutamate + phosphate + 3 H2O + H(+). The catalysed reaction is L-glutamine + H2O = L-glutamate + NH4(+). Its pathway is cofactor biosynthesis; pyridoxal 5'-phosphate biosynthesis. Its function is as follows. Catalyzes the hydrolysis of glutamine to glutamate and ammonia as part of the biosynthesis of pyridoxal 5'-phosphate. The resulting ammonia molecule is channeled to the active site of PdxS. The sequence is that of Pyridoxal 5'-phosphate synthase subunit PdxT from Haemophilus influenzae (strain PittEE).